A 578-amino-acid polypeptide reads, in one-letter code: Probable nucleoredoxin 1 (578 aa).

3 Thioredoxin domains span residues S18–R172, S178–Q321, and E325–A485.

The protein belongs to the nucleoredoxin family.

The enzyme catalyses [protein]-dithiol + NAD(+) = [protein]-disulfide + NADH + H(+). The catalysed reaction is [protein]-dithiol + NADP(+) = [protein]-disulfide + NADPH + H(+). Functionally, probable thiol-disulfide oxidoreductase required for pollen tube growth and pollen function in the pistil. Seems not to be required for in vitro pollen tube growth. May be involved in the generation of lipid signaling molecules in pistil. The sequence is that of Probable nucleoredoxin 1 from Arabidopsis thaliana (Mouse-ear cress).